Here is a 369-residue protein sequence, read N- to C-terminus: MVVFEITILGANGGPTEYGTQCFILKPARTEDPELIAVDGGAGMYQLREMLVQGRNENEGDDELVPSFYEHDREPIEFFIDSKLNIQKGLSKSLLQSLKRQGEHFESANTMKKTYEVFQGITDYYITHPHLDHISGLVVNSPSIYEQENSKKKTIWGLPHTIDVLQKHVFNDLIWPDLTAERSRKLKLKCLNPKEVQKCTIFPWDVIPFKVHHGIGVKTGAPVYSTFYIFRDRKSKDCIIVCGDVEQDRRESEESLLEEFWSYVAENIPLVHLKGILVECSCPLSSKPEQLYGHLSPIYLINELSNLNTLYNSSKGLSGLNVIVTHVKSTPAKRDPRLTILEELRFLAEERNLGDLRISIALEGHTLFL.

The protein belongs to the cyclic nucleotide phosphodiesterase class-II family.

It carries out the reaction a nucleoside 3',5'-cyclic phosphate + H2O = a nucleoside 5'-phosphate + H(+). Its function is as follows. Controls the level of cAMP in yeast cells, together with the high-affinity cAMP phosphodiesterase (PDE2). This Saccharomyces cerevisiae (strain ATCC 204508 / S288c) (Baker's yeast) protein is 3',5'-cyclic-nucleotide phosphodiesterase 1 (PDE1).